Reading from the N-terminus, the 213-residue chain is Kynurenine formamidase (213 aa).

Residue tryptophan 18 participates in substrate binding. Zn(2+)-binding residues include histidine 48, histidine 52, and aspartate 54. Catalysis depends on histidine 58, which acts as the Proton donor/acceptor. Residues histidine 160 and glutamate 172 each contribute to the Zn(2+) site.

The protein belongs to the Cyclase 1 superfamily. KynB family. Homodimer. It depends on Zn(2+) as a cofactor.

It catalyses the reaction N-formyl-L-kynurenine + H2O = L-kynurenine + formate + H(+). The protein operates within amino-acid degradation; L-tryptophan degradation via kynurenine pathway; L-kynurenine from L-tryptophan: step 2/2. Functionally, catalyzes the hydrolysis of N-formyl-L-kynurenine to L-kynurenine, the second step in the kynurenine pathway of tryptophan degradation. The protein is Kynurenine formamidase of Burkholderia cenocepacia (strain ATCC BAA-245 / DSM 16553 / LMG 16656 / NCTC 13227 / J2315 / CF5610) (Burkholderia cepacia (strain J2315)).